Here is a 436-residue protein sequence, read N- to C-terminus: Calcium/calmodulin-regulated receptor-like kinase 2 (436 aa).

The chain crosses the membrane as a helical span at residues 7 to 34; sequence LVVIGISVGLALGLLLALLLFFAIKWYY. The interval 65 to 88 is disordered; the sequence is DRANTESSQPPENGAPTQHQPWWN. The span at 69 to 88 shows a compositional bias: polar residues; that stretch reads TESSQPPENGAPTQHQPWWN. A Protein kinase domain is found at 114–375; sequence QNFTTVLGQG…PSIGEVTQFI (262 aa). ATP-binding positions include 120-128 and Lys-142; that span reads LGQGSFGPV. At Tyr-187 the chain carries Phosphotyrosine. Catalysis depends on Asp-239, which acts as the Proton acceptor. Residue Thr-276 is modified to Phosphothreonine. Tyr-284 is subject to Phosphotyrosine.

The protein belongs to the protein kinase superfamily. Ser/Thr protein kinase family.

Its subcellular location is the cell membrane. The catalysed reaction is L-seryl-[protein] + ATP = O-phospho-L-seryl-[protein] + ADP + H(+). It carries out the reaction L-threonyl-[protein] + ATP = O-phospho-L-threonyl-[protein] + ADP + H(+). The protein is Calcium/calmodulin-regulated receptor-like kinase 2 of Arabidopsis thaliana (Mouse-ear cress).